Reading from the N-terminus, the 1014-residue chain is Probable sucrose-phosphate synthase 5 (1014 aa).

2 stretches are compositionally biased toward basic and acidic residues: residues 29–41 (RRLEQELGSREAA) and 49–58 (EGEKDGKPDT). 2 disordered regions span residues 29-108 (RRLE…SDEE) and 648-677 (QLLRVPPSPSSSSAAAAAAGGGGAAASSEP).

This sequence belongs to the glycosyltransferase 1 family. As to quaternary structure, homodimer or homotetramer. In terms of tissue distribution, expressed in germinating seeds.

The enzyme catalyses beta-D-fructose 6-phosphate + UDP-alpha-D-glucose = sucrose 6(F)-phosphate + UDP + H(+). It functions in the pathway glycan biosynthesis; sucrose biosynthesis; sucrose from D-fructose 6-phosphate and UDP-alpha-D-glucose: step 1/2. Activity is regulated by phosphorylation and moderated by concentration of metabolites and light. Its function is as follows. Plays a role in photosynthetic sucrose synthesis by catalyzing the rate-limiting step of sucrose biosynthesis from UDP-glucose and fructose- 6-phosphate. Involved in the regulation of carbon partitioning in the leaves of plants. May regulate the synthesis of sucrose and therefore play a major role as a limiting factor in the export of photoassimilates out of the leaf. Plays a role for sucrose availability that is essential for plant growth and fiber elongation. In Oryza sativa subsp. japonica (Rice), this protein is Probable sucrose-phosphate synthase 5 (SPS5).